The primary structure comprises 241 residues: Small ribosomal subunit protein uS2 (241 aa).

It belongs to the universal ribosomal protein uS2 family.

This chain is Small ribosomal subunit protein uS2, found in Salmonella choleraesuis (strain SC-B67).